Consider the following 485-residue polypeptide: Glutamate--tRNA ligase (485 aa).

Residues 11 to 21 (PSPTGHLHIGN) carry the 'HIGH' region motif. The 'KMSKS' region signature appears at 252–256 (KLSKR). K255 contacts ATP.

Belongs to the class-I aminoacyl-tRNA synthetase family. Glutamate--tRNA ligase type 1 subfamily. In terms of assembly, monomer.

It localises to the cytoplasm. It carries out the reaction tRNA(Glu) + L-glutamate + ATP = L-glutamyl-tRNA(Glu) + AMP + diphosphate. Functionally, catalyzes the attachment of glutamate to tRNA(Glu) in a two-step reaction: glutamate is first activated by ATP to form Glu-AMP and then transferred to the acceptor end of tRNA(Glu). This Bacillus cytotoxicus (strain DSM 22905 / CIP 110041 / 391-98 / NVH 391-98) protein is Glutamate--tRNA ligase.